The following is a 671-amino-acid chain: Phenol 2-monooxygenase (671 aa).

FAD is bound by residues 10–43 (DVLIVGAGPAGVMAAAHLLSYGTTARPHRVRIFD) and 295–305 (LQEGRVFLAGD).

Belongs to the PheA/TfdB FAD monooxygenase family. It depends on FAD as a cofactor.

The protein localises to the cytoplasm. The enzyme catalyses phenol + NADPH + O2 + H(+) = catechol + NADP(+) + H2O. Its pathway is aromatic compound metabolism; phenol degradation. Functionally, hydroxylates phenol to catechol. Also acts on cresols. The protein is Phenol 2-monooxygenase (tbuD) of Ralstonia pickettii (Burkholderia pickettii).